Here is a 181-residue protein sequence, read N- to C-terminus: Protein GrpE (181 aa).

A compositionally biased stretch (polar residues) spans 1-10 (MENTQENPAT). Residues 1–33 (MENTQENPATPSAEDIGSEKQAAQGAAPAAEAA) form a disordered region. Over residues 21 to 33 (QAAQGAAPAAEAA) the composition is skewed to low complexity.

The protein belongs to the GrpE family. As to quaternary structure, homodimer.

The protein resides in the cytoplasm. Functionally, participates actively in the response to hyperosmotic and heat shock by preventing the aggregation of stress-denatured proteins, in association with DnaK and GrpE. It is the nucleotide exchange factor for DnaK and may function as a thermosensor. Unfolded proteins bind initially to DnaJ; upon interaction with the DnaJ-bound protein, DnaK hydrolyzes its bound ATP, resulting in the formation of a stable complex. GrpE releases ADP from DnaK; ATP binding to DnaK triggers the release of the substrate protein, thus completing the reaction cycle. Several rounds of ATP-dependent interactions between DnaJ, DnaK and GrpE are required for fully efficient folding. The sequence is that of Protein GrpE from Burkholderia cenocepacia (strain ATCC BAA-245 / DSM 16553 / LMG 16656 / NCTC 13227 / J2315 / CF5610) (Burkholderia cepacia (strain J2315)).